The sequence spans 255 residues: MKVKVFDLNGQPVDEIELPRVFLTPFRPDLIRRAVIASWTHRIQPQGRDPMAGKRRVTENIGKGHGMARVERLKTPPRYAAFVPFARGGRRAHPPKVEKIIWEGINKKERRLAIMSAIAATANYDIVKSRGHIVDNVPQLPLIVVDDLQKVSKTRETREIFKKLGIWEDIERAKEKSGVRAGKGKMRGRRYKKAKGPLIVVGKNEGIVFGARNHPGVDVVVVDNLGVEHLAPGTHPGRLTVWTVSAIERLREIYG.

The protein belongs to the universal ribosomal protein uL4 family. As to quaternary structure, part of the 50S ribosomal subunit.

In terms of biological role, one of the primary rRNA binding proteins, this protein initially binds near the 5'-end of the 23S rRNA. It is important during the early stages of 50S assembly. It makes multiple contacts with different domains of the 23S rRNA in the assembled 50S subunit and ribosome. Its function is as follows. Forms part of the polypeptide exit tunnel. The sequence is that of Large ribosomal subunit protein uL4 from Pyrococcus horikoshii (strain ATCC 700860 / DSM 12428 / JCM 9974 / NBRC 100139 / OT-3).